Here is a 204-residue protein sequence, read N- to C-terminus: Somatotropin (204 aa).

A signal peptide spans 1–17 (MDKVLFLLFVLSLGVSS). Gln18 bears the Pyrrolidone carboxylic acid mark. Residue His36 coordinates Zn(2+). A disulfide bridge links Cys69 with Cys177. Zn(2+) is bound at residue Glu186. A disulfide bond links Cys194 and Cys202.

This sequence belongs to the somatotropin/prolactin family.

The protein resides in the secreted. Growth hormone plays an important role in growth control and is involved in the regulation of several anabolic processes. Implicated as an osmoregulatory substance important for seawater adaptation. In Trichopodus trichopterus (Three spot gourami), this protein is Somatotropin (gh).